The primary structure comprises 171 residues: S-ribosylhomocysteine lyase (171 aa).

His54, His58, and Cys128 together coordinate Fe cation.

Belongs to the LuxS family. As to quaternary structure, homodimer. Fe cation serves as cofactor.

The enzyme catalyses S-(5-deoxy-D-ribos-5-yl)-L-homocysteine = (S)-4,5-dihydroxypentane-2,3-dione + L-homocysteine. Functionally, involved in the synthesis of autoinducer 2 (AI-2) which is secreted by bacteria and is used to communicate both the cell density and the metabolic potential of the environment. The regulation of gene expression in response to changes in cell density is called quorum sensing. Catalyzes the transformation of S-ribosylhomocysteine (RHC) to homocysteine (HC) and 4,5-dihydroxy-2,3-pentadione (DPD). In Shigella flexneri, this protein is S-ribosylhomocysteine lyase.